Reading from the N-terminus, the 133-residue chain is Small ribosomal subunit protein uS19 (133 aa).

It belongs to the universal ribosomal protein uS19 family.

Protein S19 forms a complex with S13 that binds strongly to the 16S ribosomal RNA. This chain is Small ribosomal subunit protein uS19, found in Thermococcus sibiricus (strain DSM 12597 / MM 739).